Consider the following 252-residue polypeptide: F-box/SPRY domain-containing protein 1 (252 aa).

An F-box domain is found at 1–48; that stretch reads MVDPLCNYNVLEAIFSYLELNDLYRCSQVCKSWYHFLNDENSDVWRWH. In terms of domain architecture, B30.2/SPRY spans 58 to 250; sequence VKSDLLASVS…VSMVYLGTPL (193 aa).

This sequence belongs to the FBXO45/Fsn family. As to quaternary structure, component of an E3 ubiquitin ligase complex composed of hiw and Fsn.

The protein localises to the synapse. It participates in protein modification; protein ubiquitination. Its function is as follows. Required in the presynaptic motoneuron to down-regulate the levels of wnd and restrain synaptic terminal growth at the neuromuscular junction (NMJ). The chain is F-box/SPRY domain-containing protein 1 from Drosophila virilis (Fruit fly).